We begin with the raw amino-acid sequence, 203 residues long: Pyridoxal 5'-phosphate synthase subunit PdxT (203 aa).

L-glutamine is bound at residue 49-51 (GES). Residue C81 is the Nucleophile of the active site. L-glutamine contacts are provided by residues R110 and 139–140 (IR). Residues H175 and E177 each act as charge relay system in the active site.

Belongs to the glutaminase PdxT/SNO family. In the presence of PdxS, forms a dodecamer of heterodimers. Only shows activity in the heterodimer.

It carries out the reaction aldehydo-D-ribose 5-phosphate + D-glyceraldehyde 3-phosphate + L-glutamine = pyridoxal 5'-phosphate + L-glutamate + phosphate + 3 H2O + H(+). The catalysed reaction is L-glutamine + H2O = L-glutamate + NH4(+). It participates in cofactor biosynthesis; pyridoxal 5'-phosphate biosynthesis. In terms of biological role, catalyzes the hydrolysis of glutamine to glutamate and ammonia as part of the biosynthesis of pyridoxal 5'-phosphate. The resulting ammonia molecule is channeled to the active site of PdxS. This chain is Pyridoxal 5'-phosphate synthase subunit PdxT, found in Parafrankia sp. (strain EAN1pec).